The sequence spans 349 residues: Anthranilate phosphoribosyltransferase (349 aa).

5-phospho-alpha-D-ribose 1-diphosphate-binding positions include Gly82, 85-86 (GD), 92-95 (NVST), 110-118 (KHGNRAVSG), and Ser122. Anthranilate is bound at residue Gly82. Ser94 lines the Mg(2+) pocket. Residue Asn113 participates in anthranilate binding. Arg168 contributes to the anthranilate binding site. Mg(2+) is bound by residues Asp227 and Glu228.

It belongs to the anthranilate phosphoribosyltransferase family. Homodimer. It depends on Mg(2+) as a cofactor.

It catalyses the reaction N-(5-phospho-beta-D-ribosyl)anthranilate + diphosphate = 5-phospho-alpha-D-ribose 1-diphosphate + anthranilate. It functions in the pathway amino-acid biosynthesis; L-tryptophan biosynthesis; L-tryptophan from chorismate: step 2/5. Catalyzes the transfer of the phosphoribosyl group of 5-phosphorylribose-1-pyrophosphate (PRPP) to anthranilate to yield N-(5'-phosphoribosyl)-anthranilate (PRA). This chain is Anthranilate phosphoribosyltransferase, found in Pseudomonas syringae pv. tomato (strain ATCC BAA-871 / DC3000).